A 757-amino-acid chain; its full sequence is Lysyl oxidase homolog 4 (757 aa).

Residues 1-25 form the signal peptide; sequence MWFLPAALPLLPLLLLLGQAPPSRP. 4 SRCR domains span residues 33–134, 160–288, 312–412, and 422–530; these read LRLV…VVCN, VRLK…VSCV, VRLR…VRCN, and VRLA…VSCT. 17 disulfides stabilise this stretch: cysteine 59–cysteine 123, cysteine 72–cysteine 133, cysteine 103–cysteine 113, cysteine 192–cysteine 277, cysteine 205–cysteine 287, cysteine 252–cysteine 262, cysteine 337–cysteine 401, cysteine 350–cysteine 411, cysteine 381–cysteine 391, cysteine 451–cysteine 516, cysteine 464–cysteine 529, cysteine 498–cysteine 508, cysteine 559–cysteine 565, cysteine 611–cysteine 659, cysteine 643–cysteine 649, cysteine 671–cysteine 681, and cysteine 718–cysteine 732. An N-linked (GlcNAc...) asparagine glycan is attached at asparagine 199. A lysyl-oxidase like region spans residues 534-737; sequence PDLVMNAQLV…WLHNCHTGDS (204 aa). Cu cation-binding residues include histidine 612, histidine 614, and histidine 616. Residue asparagine 630 is glycosylated (N-linked (GlcNAc...) asparagine). The segment at residues 639–675 is a cross-link (lysine tyrosylquinone (Lys-Tyr)); it reads KASFCLEDTNCPTGMQRRYACANFGEQGVTVGCWDTY. 2',4',5'-topaquinone is present on tyrosine 675.

This sequence belongs to the lysyl oxidase family. It depends on Cu cation as a cofactor. Requires lysine tyrosylquinone residue as cofactor. In terms of processing, the lysine tyrosylquinone cross-link (LTQ) is generated by condensation of the epsilon-amino group of a lysine with a topaquinone produced by oxidation of tyrosine. Post-translationally, may be proteolytically cleaved by BMP1.

The protein localises to the secreted. It is found in the extracellular space. It carries out the reaction L-lysyl-[protein] + O2 + H2O = (S)-2-amino-6-oxohexanoyl-[protein] + H2O2 + NH4(+). Catalyzes the oxidative deamination of lysine and hydroxylysine residues in collagen and elastin, resulting in the formation of covalent cross-linkages, and the stabilization of collagen and elastin fibers. The chain is Lysyl oxidase homolog 4 (LOXL4) from Bos taurus (Bovine).